The sequence spans 417 residues: Serine hydroxymethyltransferase (417 aa).

Residues L121 and 125 to 127 each bind (6S)-5,6,7,8-tetrahydrofolate; that span reads GHL. Position 229 is an N6-(pyridoxal phosphate)lysine (K229). Position 355 to 357 (355 to 357) interacts with (6S)-5,6,7,8-tetrahydrofolate; sequence SPF.

Belongs to the SHMT family. In terms of assembly, homodimer. Pyridoxal 5'-phosphate is required as a cofactor.

Its subcellular location is the cytoplasm. The enzyme catalyses (6R)-5,10-methylene-5,6,7,8-tetrahydrofolate + glycine + H2O = (6S)-5,6,7,8-tetrahydrofolate + L-serine. The protein operates within one-carbon metabolism; tetrahydrofolate interconversion. It functions in the pathway amino-acid biosynthesis; glycine biosynthesis; glycine from L-serine: step 1/1. In terms of biological role, catalyzes the reversible interconversion of serine and glycine with tetrahydrofolate (THF) serving as the one-carbon carrier. This reaction serves as the major source of one-carbon groups required for the biosynthesis of purines, thymidylate, methionine, and other important biomolecules. Also exhibits THF-independent aldolase activity toward beta-hydroxyamino acids, producing glycine and aldehydes, via a retro-aldol mechanism. This chain is Serine hydroxymethyltransferase, found in Aeromonas salmonicida (strain A449).